The sequence spans 63 residues: Large ribosomal subunit protein bL28 (63 aa).

It belongs to the bacterial ribosomal protein bL28 family.

This chain is Large ribosomal subunit protein bL28, found in Petrotoga mobilis (strain DSM 10674 / SJ95).